A 316-amino-acid polypeptide reads, in one-letter code: Olfactory receptor 8J1 (316 aa).

Residues 1-25 (MAPENFTRVTEFILTGVSSCPELQI) lie on the Extracellular side of the membrane. Asn5 carries N-linked (GlcNAc...) asparagine glycosylation. Residues 26-46 (PLFLVFLVLYGLTMAGNLGII) form a helical membrane-spanning segment. Over 47–54 (TLTSVDSR) the chain is Cytoplasmic. Residues 55–75 (LQTPMYFFLQHLALINLGNST) traverse the membrane as a helical segment. Residues 76–99 (VIAPKMLINFLVKKKTTSFYECAT) lie on the Extracellular side of the membrane. Residues Cys97 and Cys189 are joined by a disulfide bond. Residues 100-120 (QLGGFLFFIVSEVIMLALMAY) form a helical membrane-spanning segment. Topologically, residues 121–139 (DRYVAICNPLLYMVVVSRR) are cytoplasmic. A helical membrane pass occupies residues 140 to 160 (LCLLLVSLTYLYGFSTAIVVS). Residues 161–197 (SYVFSVSYCSSNIINHFYCDNVPLLALSCSDTYLPET) lie on the Extracellular side of the membrane. The chain crosses the membrane as a helical span at residues 198–217 (VVFISAATNVVGSLIIVLVS). Topologically, residues 218–237 (YFNIVLSILKICSSEGRKKA) are cytoplasmic. Residues 238–258 (FSTCASHMMAVTIFYGTLLFM) form a helical membrane-spanning segment. Topologically, residues 259-272 (YVQPRSNHSLDTDD) are extracellular. The chain crosses the membrane as a helical span at residues 273 to 293 (KMASVFYTLVIPMLNPLIYSL). The Cytoplasmic portion of the chain corresponds to 294 to 316 (RNKDVKTALQRFMTNLCYSFKTM).

Belongs to the G-protein coupled receptor 1 family.

It is found in the cell membrane. Functionally, odorant receptor. The sequence is that of Olfactory receptor 8J1 (OR8J1) from Homo sapiens (Human).